A 445-amino-acid chain; its full sequence is Dolichyl-diphosphooligosaccharide--protein glycosyltransferase 48 kDa subunit (445 aa).

The N-terminal stretch at 1–32 is a signal peptide; it reads MRRRRKMEAGAAARAWSLLWLLLPLLGPVCAS. At 33 to 415 the chain is on the lumenal side; sequence GPRTLVLLDN…QYERFIPSAY (383 aa). Residues 416–436 form a helical membrane-spanning segment; that stretch reads PYYASAFSMMLGLFIFSTVFL. Over 437–445 the chain is Cytoplasmic; that stretch reads HMKEKEKSD.

Belongs to the DDOST 48 kDa subunit family. Component of the oligosaccharyltransferase (OST) complex. OST exists in two different complex forms which contain common core subunits RPN1, RPN2, OST48, OST4, DAD1 and TMEM258, either STT3A or STT3B as catalytic subunits, and form-specific accessory subunits. STT3A complex assembly occurs through the formation of 3 subcomplexes. Subcomplex 1 contains RPN1 and TMEM258, subcomplex 2 contains the STT3A-specific subunits STT3A, DC2/OSTC, and KCP2 as well as the core subunit OST4, and subcomplex 3 contains RPN2, DAD1, and OST48. The STT3A complex can form stable complexes with the Sec61 complex or with both the Sec61 and TRAP complexes. Interacts with SMIM22.

Its subcellular location is the endoplasmic reticulum. The protein localises to the endoplasmic reticulum membrane. Its pathway is protein modification; protein glycosylation. In terms of biological role, subunit of the oligosaccharyl transferase (OST) complex that catalyzes the initial transfer of a defined glycan (Glc(3)Man(9)GlcNAc(2) in eukaryotes) from the lipid carrier dolichol-pyrophosphate to an asparagine residue within an Asn-X-Ser/Thr consensus motif in nascent polypeptide chains, the first step in protein N-glycosylation. N-glycosylation occurs cotranslationally and the complex associates with the Sec61 complex at the channel-forming translocon complex that mediates protein translocation across the endoplasmic reticulum (ER). All subunits are required for a maximal enzyme activity. Required for the assembly of both SST3A- and SS3B-containing OST complexes. The protein is Dolichyl-diphosphooligosaccharide--protein glycosyltransferase 48 kDa subunit of Canis lupus familiaris (Dog).